The chain runs to 328 residues: Endochitinase (328 aa).

An N-terminal signal peptide occupies residues 1 to 26 (MRRHKEVNFVAYLLFSLLVLVSAALA). The 42-residue stretch at 27–68 (QNCGSQGGGKACASGQCCSKFGWCGNTNDYCGSGNCQSQCPG) folds into the Chitin-binding type-1 domain. 7 disulfide bridges follow: cysteine 29–cysteine 44, cysteine 38–cysteine 50, cysteine 43–cysteine 57, cysteine 62–cysteine 66, cysteine 100–cysteine 162, cysteine 174–cysteine 182, and cysteine 281–cysteine 313. Glutamate 144 serves as the catalytic Proton donor. Residues 322-328 (ALLVDTL) constitute a propeptide, removed in mature form.

It belongs to the glycosyl hydrolase 19 family. Chitinase class I subfamily.

The protein localises to the vacuole. The catalysed reaction is Random endo-hydrolysis of N-acetyl-beta-D-glucosaminide (1-&gt;4)-beta-linkages in chitin and chitodextrins.. Defense against chitin-containing fungal pathogens. This chain is Endochitinase, found in Solanum tuberosum (Potato).